The chain runs to 203 residues: Glycerol-3-phosphate acyltransferase (203 aa).

Transmembrane regions (helical) follow at residues 1–21 (MPAWLSALLAALGGYLLGSIP), 52–72 (VGKGPALLVLLVDAAKGAAAV), 73–93 (ALGSALGSPWWVVVAALGAVI), 115–135 (ILLAMAWPVALATFGVWLLGI), 140–160 (IVSFSSLLAAVAAPLLMWALG), and 161–181 (QPLPYLLFALAGGVYVIAAHR).

It belongs to the PlsY family. As to quaternary structure, probably interacts with PlsX.

Its subcellular location is the cell inner membrane. It catalyses the reaction an acyl phosphate + sn-glycerol 3-phosphate = a 1-acyl-sn-glycero-3-phosphate + phosphate. Its pathway is lipid metabolism; phospholipid metabolism. In terms of biological role, catalyzes the transfer of an acyl group from acyl-phosphate (acyl-PO(4)) to glycerol-3-phosphate (G3P) to form lysophosphatidic acid (LPA). This enzyme utilizes acyl-phosphate as fatty acyl donor, but not acyl-CoA or acyl-ACP. The protein is Glycerol-3-phosphate acyltransferase of Synechococcus sp. (strain JA-3-3Ab) (Cyanobacteria bacterium Yellowstone A-Prime).